Reading from the N-terminus, the 95-residue chain is Co-chaperonin GroES (95 aa).

This sequence belongs to the GroES chaperonin family. In terms of assembly, heptamer of 7 subunits arranged in a ring. Interacts with the chaperonin GroEL.

The protein localises to the cytoplasm. Its function is as follows. Together with the chaperonin GroEL, plays an essential role in assisting protein folding. The GroEL-GroES system forms a nano-cage that allows encapsulation of the non-native substrate proteins and provides a physical environment optimized to promote and accelerate protein folding. GroES binds to the apical surface of the GroEL ring, thereby capping the opening of the GroEL channel. In Rickettsia felis (strain ATCC VR-1525 / URRWXCal2) (Rickettsia azadi), this protein is Co-chaperonin GroES.